The sequence spans 27 residues: Small integral membrane protein 43 (27 aa).

The tract at residues 15 to 21 is important for interaction with SLC2A1 and SLC2A3; the sequence is HREPWGF.

Interacts with glucose transporters SLC2A1/GLUT1 and SLC2A3/GLUT3; the interactions may promote SLC2A1- and SLC2A3-mediated glucose transport to meet the energy needs of mesendoderm differentiation.

It is found in the cell membrane. In terms of biological role, required for mesendoderm differentiation. Interacts with glucose transporters and promotes glucose uptake. Probably augments the glucose uptake capacity of glucose transporter proteins to meet the energy needs of mesendoderm differentiation. In Pongo abelii (Sumatran orangutan), this protein is Small integral membrane protein 43.